The following is a 242-amino-acid chain: Biosynthetic peptidoglycan transglycosylase (242 aa).

The helical transmembrane segment at 19–39 (LMVVLAVFWGGGIALFSVAPV) threads the bilayer.

It belongs to the glycosyltransferase 51 family.

Its subcellular location is the cell inner membrane. It catalyses the reaction [GlcNAc-(1-&gt;4)-Mur2Ac(oyl-L-Ala-gamma-D-Glu-L-Lys-D-Ala-D-Ala)](n)-di-trans,octa-cis-undecaprenyl diphosphate + beta-D-GlcNAc-(1-&gt;4)-Mur2Ac(oyl-L-Ala-gamma-D-Glu-L-Lys-D-Ala-D-Ala)-di-trans,octa-cis-undecaprenyl diphosphate = [GlcNAc-(1-&gt;4)-Mur2Ac(oyl-L-Ala-gamma-D-Glu-L-Lys-D-Ala-D-Ala)](n+1)-di-trans,octa-cis-undecaprenyl diphosphate + di-trans,octa-cis-undecaprenyl diphosphate + H(+). It functions in the pathway cell wall biogenesis; peptidoglycan biosynthesis. Peptidoglycan polymerase that catalyzes glycan chain elongation from lipid-linked precursors. This Shigella dysenteriae serotype 1 (strain Sd197) protein is Biosynthetic peptidoglycan transglycosylase.